Here is a 553-residue protein sequence, read N- to C-terminus: Phosphoenolpyruvate carboxykinase (ATP) (553 aa).

Residues 1–22 form a disordered region; the sequence is MAPPTAVGSSINFEGHPTIKST. 255-262 serves as a coordination point for ATP; sequence GLSGTGKT.

It belongs to the phosphoenolpyruvate carboxykinase (ATP) family.

It carries out the reaction oxaloacetate + ATP = phosphoenolpyruvate + ADP + CO2. Its pathway is carbohydrate biosynthesis; gluconeogenesis. In Candida albicans (Yeast), this protein is Phosphoenolpyruvate carboxykinase (ATP) (PCK1).